The sequence spans 115 residues: Insulin (115 aa).

The first 26 residues, 1-26 (MALSPFLAAVIPLVLLLSRAPPSADT), serve as a signal peptide directing secretion. 3 disulfide bridges follow: cysteine 33–cysteine 101, cysteine 45–cysteine 114, and cysteine 100–cysteine 105. Positions 60–92 (DTGALAAFLPLAYAEDNESQDDESIGINEVLKS) are cleaved as a propeptide — c peptide.

This sequence belongs to the insulin family. Heterodimer of a B chain and an A chain linked by two disulfide bonds.

It is found in the secreted. Its function is as follows. Insulin decreases blood glucose concentration. It increases cell permeability to monosaccharides, amino acids and fatty acids. It accelerates glycolysis, the pentose phosphate cycle, and glycogen synthesis in liver. This Myxine glutinosa (Atlantic hagfish) protein is Insulin (ins).